We begin with the raw amino-acid sequence, 415 residues long: Gamma-glutamyl phosphate reductase (415 aa).

The protein belongs to the gamma-glutamyl phosphate reductase family.

The protein localises to the cytoplasm. It catalyses the reaction L-glutamate 5-semialdehyde + phosphate + NADP(+) = L-glutamyl 5-phosphate + NADPH + H(+). The protein operates within amino-acid biosynthesis; L-proline biosynthesis; L-glutamate 5-semialdehyde from L-glutamate: step 2/2. In terms of biological role, catalyzes the NADPH-dependent reduction of L-glutamate 5-phosphate into L-glutamate 5-semialdehyde and phosphate. The product spontaneously undergoes cyclization to form 1-pyrroline-5-carboxylate. The protein is Gamma-glutamyl phosphate reductase of Clostridium perfringens (strain 13 / Type A).